The following is a 159-amino-acid chain: Succinate dehydrogenase assembly factor 2, mitochondrial (159 aa).

The N-terminal 14 residues, 1–14 (MASFCLSRCCALRG), are a transit peptide targeting the mitochondrion.

Belongs to the SDHAF2 family. As to quaternary structure, interacts with the flavoprotein subunit within the SDH catalytic dimer.

Its subcellular location is the mitochondrion matrix. Its function is as follows. Plays an essential role in the assembly of succinate dehydrogenase (SDH), an enzyme complex (also referred to as respiratory complex II) that is a component of both the tricarboxylic acid (TCA) cycle and the mitochondrial electron transport chain, and which couples the oxidation of succinate to fumarate with the reduction of ubiquinone (coenzyme Q) to ubiquinol. Required for flavinylation (covalent attachment of FAD) of the flavoprotein subunit of the SDH catalytic dimer. This chain is Succinate dehydrogenase assembly factor 2, mitochondrial, found in Culex quinquefasciatus (Southern house mosquito).